The chain runs to 548 residues: Glucose-6-phosphate isomerase (548 aa).

E353 serves as the catalytic Proton donor. Residues H384 and K512 contribute to the active site.

This sequence belongs to the GPI family.

It is found in the cytoplasm. The catalysed reaction is alpha-D-glucose 6-phosphate = beta-D-fructose 6-phosphate. It participates in carbohydrate biosynthesis; gluconeogenesis. Its pathway is carbohydrate degradation; glycolysis; D-glyceraldehyde 3-phosphate and glycerone phosphate from D-glucose: step 2/4. Catalyzes the reversible isomerization of glucose-6-phosphate to fructose-6-phosphate. The chain is Glucose-6-phosphate isomerase from Chlorobium chlorochromatii (strain CaD3).